We begin with the raw amino-acid sequence, 256 residues long: uncharacterized protein (256 aa).

ATP is bound at residue 29 to 36; it reads GDDHSGKT.

This is an uncharacterized protein from Saccharomyces cerevisiae (strain ATCC 204508 / S288c) (Baker's yeast).